A 479-amino-acid polypeptide reads, in one-letter code: Anaerobic nitric oxide reductase flavorubredoxin (479 aa).

The tract at residues 30–210 is zinc metallo-hydrolase; that stretch reads LRGSSYNSYL…PFSRLVTPKI (181 aa). The Fe cation site is built by His79, Glu81, Asp83, His147, Asp166, and His227. The 140-residue stretch at 254 to 393 folds into the Flavodoxin-like domain; it reads ITIFYDTMSN…LCREHGREIA (140 aa). FMN is bound by residues 260 to 264 and 342 to 369; these read TMSNN and AFGSHGWSGGAVDRLSTRLQDAGFEMSL. In terms of domain architecture, Rubredoxin-like spans 423-474; that stretch reads GPRMQCSVCQWIYDPAKGEPMQDVAPGTPWSEVPDNFLCPECSLGKDVFEEL. The Fe cation site is built by Cys428, Cys431, Cys461, and Cys464.

In the N-terminal section; belongs to the zinc metallo-hydrolase group 3 family. As to quaternary structure, homotetramer. Requires Fe cation as cofactor. FMN is required as a cofactor.

The protein localises to the cytoplasm. It participates in nitrogen metabolism; nitric oxide reduction. In terms of biological role, anaerobic nitric oxide reductase; uses NADH to detoxify nitric oxide (NO), protecting several 4Fe-4S NO-sensitive enzymes. Has at least 2 reductase partners, only one of which (NorW, flavorubredoxin reductase) has been identified. NO probably binds to the di-iron center; electrons enter from the NorW at rubredoxin and are transferred sequentially to the FMN center and the di-iron center. Also able to function as an aerobic oxygen reductase. This chain is Anaerobic nitric oxide reductase flavorubredoxin, found in Shigella dysenteriae serotype 1 (strain Sd197).